The chain runs to 616 residues: Spastin (616 aa).

The interval 1 to 43 (MNSPGGRGKKKGSGGASNPVPPRPPPPCLAPAPPAAGPAPPPE) is disordered. Positions 1–50 (MNSPGGRGKKKGSGGASNPVPPRPPPPCLAPAPPAAGPAPPPESPHKRNL) are required for nuclear localization. The Cytoplasmic portion of the chain corresponds to 1–56 (MNSPGGRGKKKGSGGASNPVPPRPPPPCLAPAPPAAGPAPPPESPHKRNLYYFSYP). The tract at residues 1-80 (MNSPGGRGKK…LGLLFVWLCQ (80 aa)) is required for interaction with ATL1. Residues 1–194 (MNSPGGRGKK…LVMAKDRLQL (194 aa)) are required for midbody localization. The segment at 1–300 (MNSPGGRGKK…GTPKTNRTNK (300 aa)) is required for interaction with RTN1. Residues 4–11 (PGGRGKKK) carry the Nuclear localization signal motif. Over residues 19–43 (PVPPRPPPPCLAPAPPAAGPAPPPE) the composition is skewed to pro residues. The tract at residues 50–87 (LYYFSYPLFVGFALLRLVAFHLGLLFVWLCQRFSRALM) is required for interaction with SSNA1 and microtubules. Positions 57–77 (LFVGFALLRLVAFHLGLLFVW) form an intramembrane region, helical. A Nuclear export signal motif is present at residues 59-67 (VGFALLRLV). The Cytoplasmic segment spans residues 78-616 (LCQRFSRALM…WNKDFGDTTV (539 aa)). The interval 112 to 196 (EAERVRVFHK…MAKDRLQLLE (85 aa)) is sufficient for interaction with CHMP1B. The tract at residues 114-200 (ERVRVFHKQA…RLQLLEKMQP (87 aa)) is required for interaction with microtubules. The MIT domain maps to 120-195 (HKQAFEYISI…VMAKDRLQLL (76 aa)). Residues 224-266 (HLQSESGAVPKRKDPLTHTSNSLPRSKTVMKTGSAGLSGHHRA) are disordered. The tract at residues 228-616 (ESGAVPKRKD…WNKDFGDTTV (389 aa)) is sufficient for microtubule severing. The segment covering 240 to 254 (THTSNSLPRSKTVMK) has biased composition (polar residues). Residues Ser-245 and Ser-268 each carry the phosphoserine modification. Residues 270–328 (SGLSMVSGVKQGSGPAPTTHKGTPKTNRTNKPSTPTTATRKKKDLKNFRNVDSNLANLI) form a required for interaction with microtubules and microtubule severing region. The interval 278-312 (VKQGSGPAPTTHKGTPKTNRTNKPSTPTTATRKKK) is disordered. Residues 289–307 (HKGTPKTNRTNKPSTPTTA) show a composition bias toward polar residues. At Thr-306 the chain carries Phosphothreonine. The Nuclear localization signal motif lies at 309-312 (RKKK). The segment at 310 to 312 (KKK) is required for interaction with microtubules. 382 to 389 (GPPGNGKT) contributes to the ATP binding site. A Phosphoserine modification is found at Ser-597.

This sequence belongs to the AAA ATPase family. Spastin subfamily. In terms of assembly, homohexamer. Mostly monomeric, but assembles into hexameric structure for short periods of time. Oligomerization seems to be a prerequisite for catalytic activity. Binding to ATP in a cleft between two adjacent subunits stabilizes the homohexameric form. Binds to microtubules at least in part via the alpha-tubulin and beta-tubulin tails. The hexamer adopts a ring conformation through which microtubules pass prior to being severed. Does not interact strongly with tubulin heterodimers. Interacts (via MIT domain) with CHMP1B; the interaction is direct. Interacts with SSNA1. Interacts with ATL1. Interacts with RTN1. Interacts with ZFYVE27. Isoform 1 but not isoform 3 interacts with RTN2. Interacts with REEP1. Interacts (via MIT domain) with IST1. As to expression, expressed in brain, heart, kidney, liver, lung, pancreas, placenta and skeletal muscle. The short isoforms may predominate in brain and spinal cord.

Its subcellular location is the membrane. The protein localises to the endoplasmic reticulum. The protein resides in the midbody. It localises to the cytoplasm. It is found in the cytoskeleton. Its subcellular location is the microtubule organizing center. The protein localises to the centrosome. The protein resides in the perinuclear region. It localises to the nucleus. It is found in the spindle. Its subcellular location is the cell projection. The protein localises to the axon. The protein resides in the endoplasmic reticulum membrane. It localises to the nucleus membrane. It is found in the lipid droplet. Its subcellular location is the endosome. The catalysed reaction is n ATP + n H2O + a microtubule = n ADP + n phosphate + (n+1) alpha/beta tubulin heterodimers.. Its activity is regulated as follows. Allosteric enzyme with a cooperative mechanism; at least two neighbor subunits influence each other strongly in spastin hexamers. Microtubule binding promotes cooperative interactions among spastin subunits. ATP-bound enzyme interacts strongly and cooperatively with microtubules; this interaction stimulates ATP hydrolysis. Functionally, ATP-dependent microtubule severing protein that specifically recognizes and cuts microtubules that are polyglutamylated. Preferentially recognizes and acts on microtubules decorated with short polyglutamate tails: severing activity increases as the number of glutamates per tubulin rises from one to eight, but decreases beyond this glutamylation threshold. Severing activity is not dependent on tubulin acetylation or detyrosination. Microtubule severing promotes reorganization of cellular microtubule arrays and the release of microtubules from the centrosome following nucleation. It is critical for the biogenesis and maintenance of complex microtubule arrays in axons, spindles and cilia. SPAST is involved in abscission step of cytokinesis and nuclear envelope reassembly during anaphase in cooperation with the ESCRT-III complex. Recruited at the midbody, probably by IST1, and participates in membrane fission during abscission together with the ESCRT-III complex. Recruited to the nuclear membrane by IST1 and mediates microtubule severing, promoting nuclear envelope sealing and mitotic spindle disassembly during late anaphase. Required for membrane traffic from the endoplasmic reticulum (ER) to the Golgi and endosome recycling. Recruited by IST1 to endosomes and regulates early endosomal tubulation and recycling by mediating microtubule severing. Probably plays a role in axon growth and the formation of axonal branches. Its function is as follows. Involved in lipid metabolism by regulating the size and distribution of lipid droplets. This is Spastin from Homo sapiens (Human).